Reading from the N-terminus, the 98-residue chain is Large ribosomal subunit protein uL23 (98 aa).

It belongs to the universal ribosomal protein uL23 family. In terms of assembly, part of the 50S ribosomal subunit. Contacts protein L29, and trigger factor when it is bound to the ribosome.

Functionally, one of the early assembly proteins it binds 23S rRNA. One of the proteins that surrounds the polypeptide exit tunnel on the outside of the ribosome. Forms the main docking site for trigger factor binding to the ribosome. This Rickettsia prowazekii (strain Madrid E) protein is Large ribosomal subunit protein uL23.